Consider the following 178-residue polypeptide: Fatty-acid and retinol-binding protein 1 (178 aa).

Residues 1-16 (MYHQLILMALIGVIMA) form the signal peptide. Coiled coils occupy residues 67–89 (DAAL…ELRN) and 122–154 (QKLD…LKAT).

This sequence belongs to the fatty-acid and retinol-binding protein (FARBP) family. In terms of processing, not glycosylated.

It localises to the secreted. Binds retinol and different fatty acids. The protein is Fatty-acid and retinol-binding protein 1 of Litomosoides sigmodontis (Filarial nematode worm).